Reading from the N-terminus, the 819-residue chain is Lysine-specific demethylase JMJ18 (819 aa).

The tract at residues 1 to 39 (MENPPLESEIKEDMSLKNHPPDKDKDKDTIMEQPSSPRH) is disordered. The span at 8 to 30 (SEIKEDMSLKNHPPDKDKDKDTI) shows a compositional bias: basic and acidic residues. Residues 59–100 (APVFTPSLEEFVDPLAYIEKIRPLAEPYGICRIIPPSTWKPP) enclose the JmjN domain. The segment at 120–171 (TVDLLQNREPMKKKPKSRKRKRRRNSRMGSSKRRSGSSPAESTSSPEAEEKF) is disordered. A Nuclear localization signal motif is present at residues 130–137 (MKKKPKSR). A compositionally biased stretch (basic residues) spans 130-154 (MKKKPKSRKRKRRRNSRMGSSKRRS). The span at 155–165 (GSSPAESTSSP) shows a compositional bias: low complexity. One can recognise a JmjC domain in the interval 261–427 (QYTLSGWNLN…HGQNAVELYS (167 aa)). Fe cation contacts are provided by His307, Glu309, and His395. Zn(2+)-binding residues include Cys519, Cys522, Cys533, Cys535, Cys542, His545, Cys550, and Cys552. A C5HC2 zinc finger spans residues 519 to 571 (CFSCFYDLHLSASGCKCSPEEYACLKHADDLCSCDVKDGFILLRYTMDELSSL). Positions 644–702 (ASENLGVSVEPINLGFLIFGKLWCNKYAIFPKGFRSRVKFYNVLDPTRMSNYISEVLDA) constitute an FYR N-terminal domain. The 85-residue stretch at 704–788 (LMGPLFRVTL…HRLVEYWNHK (85 aa)) folds into the FYR C-terminal domain.

The protein belongs to the JARID1 histone demethylase family. Requires Fe(2+) as cofactor. In terms of tissue distribution, expressed in vascular tissues of roots, cotyledons, leaves and flowers. Expressed predominantly in phloem companion cells of roots. Present in inflorescences, roots, siliques, leaves and stems.

The protein localises to the nucleus. The enzyme catalyses N(6),N(6),N(6)-trimethyl-L-lysyl(4)-[histone H3] + 2-oxoglutarate + O2 = N(6),N(6)-dimethyl-L-lysyl(4)-[histone H3] + formaldehyde + succinate + CO2. It catalyses the reaction N(6),N(6)-dimethyl-L-lysyl(4)-[histone H3] + 2-oxoglutarate + O2 = N(6)-methyl-L-lysyl(4)-[histone H3] + formaldehyde + succinate + CO2. Its function is as follows. Histone demethylase that demethylates 'Lys-4' (H3K4me) of histone H3 with a specific activity for H3K4me3 and H3K4me2. No activity on H3K9me3/2, H3K27me3/2 and H3K36me3/2. Involved in the control of flowering time by demethylating H3K4me3 at the FLC locus and repressing its expression. The repression of FLC level and reduction in H3K4me3 at the FLC locus results in induction of the flowering activator FT, which is a downstream target of FLC. The polypeptide is Lysine-specific demethylase JMJ18 (Arabidopsis thaliana (Mouse-ear cress)).